The following is a 416-amino-acid chain: CBL-interacting serine/threonine-protein kinase 21 (416 aa).

Positions 12–264 (YEIGRTIGEG…AEIIIKDSWF (253 aa)) constitute a Protein kinase domain. ATP contacts are provided by residues 18–26 (IGEGNFAKV) and K41. The active-site Proton acceptor is D134. The segment at 152-178 (DFGLSAVPKSGDMLSTACGSPCYIAPE) is activation loop. Phosphoserine is present on S156. At T167 the chain carries Phosphothreonine. The 25-residue stretch at 291–315 (ASSNFINAFQIIAMSSDLDLSGLFE) folds into the NAF domain. The tract at residues 321–351 (RYKTRIGSKNTAQETIKKIEAAATYVSLSVE) is PPI.

Belongs to the protein kinase superfamily. CAMK Ser/Thr protein kinase family. SNF1 subfamily. Interacts with CBL9. Mn(2+) is required as a cofactor.

It carries out the reaction L-seryl-[protein] + ATP = O-phospho-L-seryl-[protein] + ADP + H(+). The enzyme catalyses L-threonyl-[protein] + ATP = O-phospho-L-threonyl-[protein] + ADP + H(+). In terms of biological role, CIPK serine-threonine protein kinases interact with CBL proteins. Binding of a CBL protein to the regulatory NAF domain of CIPK protein lead to the activation of the kinase in a calcium-dependent manner. In Arabidopsis thaliana (Mouse-ear cress), this protein is CBL-interacting serine/threonine-protein kinase 21 (CIPK21).